A 935-amino-acid polypeptide reads, in one-letter code: Isoleucine--tRNA ligase (935 aa).

The 'HIGH' region signature appears at 58–68; that stretch reads PYANGSIHVGH. L-isoleucyl-5'-AMP is bound at residue Glu558. Positions 599–603 match the 'KMSKS' region motif; the sequence is KMSKS. Lys602 contributes to the ATP binding site. Residues Cys897, Cys900, Cys917, and Cys920 each coordinate Zn(2+).

This sequence belongs to the class-I aminoacyl-tRNA synthetase family. IleS type 1 subfamily. Monomer. Zn(2+) serves as cofactor.

The protein localises to the cytoplasm. The enzyme catalyses tRNA(Ile) + L-isoleucine + ATP = L-isoleucyl-tRNA(Ile) + AMP + diphosphate. Its function is as follows. Catalyzes the attachment of isoleucine to tRNA(Ile). As IleRS can inadvertently accommodate and process structurally similar amino acids such as valine, to avoid such errors it has two additional distinct tRNA(Ile)-dependent editing activities. One activity is designated as 'pretransfer' editing and involves the hydrolysis of activated Val-AMP. The other activity is designated 'posttransfer' editing and involves deacylation of mischarged Val-tRNA(Ile). This Francisella tularensis subsp. mediasiatica (strain FSC147) protein is Isoleucine--tRNA ligase.